The primary structure comprises 148 residues: 3-hydroxyacyl-[acyl-carrier-protein] dehydratase FabZ (148 aa).

His48 is a catalytic residue.

Belongs to the thioester dehydratase family. FabZ subfamily.

The protein resides in the cytoplasm. The catalysed reaction is a (3R)-hydroxyacyl-[ACP] = a (2E)-enoyl-[ACP] + H2O. Its function is as follows. Involved in unsaturated fatty acids biosynthesis. Catalyzes the dehydration of short chain beta-hydroxyacyl-ACPs and long chain saturated and unsaturated beta-hydroxyacyl-ACPs. The chain is 3-hydroxyacyl-[acyl-carrier-protein] dehydratase FabZ from Campylobacter fetus subsp. fetus (strain 82-40).